Reading from the N-terminus, the 554-residue chain is 5'-AMP-activated protein kinase catalytic subunit alpha-1 (554 aa).

The Protein kinase domain occupies 22–274 (YILGDTLGVG…IKDIREHEWF (253 aa)). A Phosphothreonine modification is found at threonine 27. ATP is bound by residues 28–36 (LGVGTFGKV) and lysine 51. The active-site Proton acceptor is the aspartate 145. Residue threonine 178 is modified to Phosphothreonine; by LKB1 and CaMKK2. Threonine 264 and threonine 350 each carry phosphothreonine. The segment at 297–376 (EALKEVCEKF…PERVPFLVAE (80 aa)) is AIS. Position 351 is a phosphoserine (serine 351). Phosphoserine; by ULK1 is present on serine 355. Threonine 363 is modified (phosphothreonine; by ULK1). Threonine 377 is modified (phosphothreonine). At serine 392 the chain carries Phosphoserine; by ULK1. Position 462 is a phosphoserine (serine 462). The span at 480–500 (KSGTATPQRSGSVSNYRSCQR) shows a compositional bias: polar residues. Residues 480–531 (KSGTATPQRSGSVSNYRSCQRSDSDAEAQGKSSEVSLTSSVTSLDSSPVDLT) form a disordered region. Residue serine 481 is modified to Phosphoserine; by ULK1. Threonine 483 is subject to Phosphothreonine; by ULK1. Threonine 485 is modified (phosphothreonine). Residues serine 491, serine 503, serine 519, and serine 522 each carry the phosphoserine modification. The segment covering 511–530 (SSEVSLTSSVTSLDSSPVDL) has biased composition (low complexity).

The protein belongs to the protein kinase superfamily. CAMK Ser/Thr protein kinase family. SNF1 subfamily. In terms of assembly, AMPK is a heterotrimer of an alpha catalytic subunit (PRKAA1 or PRKAA2), a beta (PRKAB1 or PRKAB2) and a gamma non-catalytic subunits (PRKAG1, PRKAG2 or PRKAG3). Interacts with FNIP1 and FNIP2. The cofactor is Mg(2+). Post-translationally, ubiquitinated. Phosphorylated at Thr-183 by STK11/LKB1 in complex with STE20-related adapter-alpha (STRADA) pseudo kinase and CAB39. Also phosphorylated at Thr-183 by CAMKK2; triggered by a rise in intracellular calcium ions, without detectable changes in the AMP/ATP ratio. CAMKK1 can also phosphorylate Thr-183, but at a much lower level. Dephosphorylated by protein phosphatase 2A and 2C (PP2A and PP2C). Phosphorylated by ULK1 and ULK2; leading to negatively regulate AMPK activity and suggesting the existence of a regulatory feedback loop between ULK1, ULK2 and AMPK. Dephosphorylated by PPM1A and PPM1B. In terms of processing, glycosylated; O-GlcNAcylated by OGT, promoting the AMP-activated protein kinase (AMPK) activity.

The protein localises to the cytoplasm. The protein resides in the nucleus. It catalyses the reaction L-seryl-[protein] + ATP = O-phospho-L-seryl-[protein] + ADP + H(+). The enzyme catalyses L-threonyl-[protein] + ATP = O-phospho-L-threonyl-[protein] + ADP + H(+). It carries out the reaction L-seryl-[acetyl-CoA carboxylase] + ATP = O-phospho-L-seryl-[acetyl-CoA carboxylase] + ADP + H(+). The catalysed reaction is L-seryl-[3-hydroxy-3-methylglutaryl-coenzyme A reductase] + ATP = O-phospho-L-seryl-[3-hydroxy-3-methylglutaryl-coenzyme A reductase] + ADP + H(+). It catalyses the reaction L-seryl-[tau protein] + ATP = O-phospho-L-seryl-[tau protein] + ADP + H(+). The enzyme catalyses L-threonyl-[tau protein] + ATP = O-phospho-L-threonyl-[tau protein] + ADP + H(+). With respect to regulation, activated by phosphorylation on Thr-183. Binding of AMP to non-catalytic gamma subunit (PRKAG1, PRKAG2 or PRKAG3) results in allosteric activation, inducing phosphorylation on Thr-183. AMP-binding to gamma subunit also sustains activity by preventing dephosphorylation of Thr-183. ADP also stimulates Thr-183 phosphorylation, without stimulating already phosphorylated AMPK. ATP promotes dephosphorylation of Thr-183, rendering the enzyme inactive. Under physiological conditions AMPK mainly exists in its inactive form in complex with ATP, which is much more abundant than AMP. Selectively inhibited by compound C (6-[4-(2-Piperidin-1-yl-ethoxy)-phenyl)]-3-pyridin-4-yl-pyyrazolo[1,5-a] pyrimidine. Activated by resveratrol, a natural polyphenol present in red wine, and S17834, a synthetic polyphenol. In terms of biological role, catalytic subunit of AMP-activated protein kinase (AMPK), an energy sensor protein kinase that plays a key role in regulating cellular energy metabolism. In response to reduction of intracellular ATP levels, AMPK activates energy-producing pathways and inhibits energy-consuming processes: inhibits protein, carbohydrate and lipid biosynthesis, as well as cell growth and proliferation. AMPK acts via direct phosphorylation of metabolic enzymes, and by longer-term effects via phosphorylation of transcription regulators. Regulates lipid synthesis by phosphorylating and inactivating lipid metabolic enzymes such as ACACA, ACACB, GYS1, HMGCR and LIPE; regulates fatty acid and cholesterol synthesis by phosphorylating acetyl-CoA carboxylase (ACACA and ACACB) and hormone-sensitive lipase (LIPE) enzymes, respectively. Promotes lipolysis of lipid droplets by mediating phosphorylation of isoform 1 of CHKA (CHKalpha2). Regulates insulin-signaling and glycolysis by phosphorylating IRS1, PFKFB2 and PFKFB3. AMPK stimulates glucose uptake in muscle by increasing the translocation of the glucose transporter SLC2A4/GLUT4 to the plasma membrane, possibly by mediating phosphorylation of TBC1D4/AS160. Regulates transcription and chromatin structure by phosphorylating transcription regulators involved in energy metabolism such as CRTC2/TORC2, FOXO3, histone H2B, HDAC5, MEF2C, MLXIPL/ChREBP, EP300, HNF4A, p53/TP53, SREBF1, SREBF2 and PPARGC1A. Acts as a key regulator of glucose homeostasis in liver by phosphorylating CRTC2/TORC2, leading to CRTC2/TORC2 sequestration in the cytoplasm. In response to stress, phosphorylates 'Ser-36' of histone H2B (H2BS36ph), leading to promote transcription. Acts as a key regulator of cell growth and proliferation by phosphorylating FNIP1, TSC2, RPTOR, WDR24 and ATG1/ULK1: in response to nutrient limitation, negatively regulates the mTORC1 complex by phosphorylating RPTOR component of the mTORC1 complex and by phosphorylating and activating TSC2. Also phosphorylates and inhibits GATOR2 subunit WDR24 in response to nutrient limitation, leading to suppress glucose-mediated mTORC1 activation. In response to energetic stress, phosphorylates FNIP1, inactivating the non-canonical mTORC1 signaling, thereby promoting nuclear translocation of TFEB and TFE3, and inducing transcription of lysosomal or autophagy genes. In response to nutrient limitation, promotes autophagy by phosphorylating and activating ATG1/ULK1. In that process also activates WDR45/WIPI4. Phosphorylates CASP6, thereby preventing its autoprocessing and subsequent activation. In response to nutrient limitation, phosphorylates transcription factor FOXO3 promoting FOXO3 mitochondrial import. Also acts as a regulator of cellular polarity by remodeling the actin cytoskeleton; probably by indirectly activating myosin. AMPK also acts as a regulator of circadian rhythm by mediating phosphorylation of CRY1, leading to destabilize it. May regulate the Wnt signaling pathway by phosphorylating CTNNB1, leading to stabilize it. Also has tau-protein kinase activity: in response to amyloid beta A4 protein (APP) exposure, activated by CAMKK2, leading to phosphorylation of MAPT/TAU; however the relevance of such data remains unclear in vivo. Also phosphorylates CFTR, EEF2K, KLC1, NOS3 and SLC12A1. Regulates hepatic lipogenesis. Activated via SIRT3, represses sterol regulatory element-binding protein (SREBP) transcriptional activities and ATP-consuming lipogenesis to restore cellular energy balance. Upon stress, regulates mitochondrial fragmentation through phosphorylation of MTFR1L. This chain is 5'-AMP-activated protein kinase catalytic subunit alpha-1 (PRKAA1), found in Pongo abelii (Sumatran orangutan).